The primary structure comprises 524 residues: Beta-glucosidase 21 (524 aa).

An N-terminal signal peptide occupies residues 1-24; that stretch reads MALQKFPLMGLLLLLTILVSVTTA. Glutamine 55 is an a beta-D-glucoside binding site. Asparagine 61 carries an N-linked (GlcNAc...) asparagine glycan. A beta-D-glucoside is bound by residues histidine 158 and 203–204; that span reads NE. Catalysis depends on glutamate 204, which acts as the Proton donor. Residues cysteine 223 and cysteine 230 are joined by a disulfide bond. Residues tyrosine 346, glutamate 418, tryptophan 468, 475–476, and phenylalanine 484 contribute to the a beta-D-glucoside site; that span reads EW. The active-site Nucleophile is glutamate 418. The N-linked (GlcNAc...) asparagine glycan is linked to asparagine 494. The short motif at 521 to 524 is the Prevents secretion from ER element; it reads RDEL.

It belongs to the glycosyl hydrolase 1 family. In terms of assembly, component of the PYK10 complex, at least composed of PYK10/BGLU23, BGLU21, BGLU22, JAL22, JAL23, PBP1/JAL30, PBP2/JAL31, JAL32, JAL33, JAL34, JAL35, GLL22 and GLL23. In terms of tissue distribution, expressed exclusively in roots.

The protein resides in the endoplasmic reticulum lumen. The enzyme catalyses Hydrolysis of terminal, non-reducing beta-D-glucosyl residues with release of beta-D-glucose.. With respect to regulation, activated upon binding to PBP1 or PBP2. Beta-D-glucosidase active on scopolin &gt;&gt; esculin &gt;&gt; 4-MU-glucoside &gt; DIMBOA-glucoside. No activity with pNP-glucoside, oNP-glucoside and sinigrin as substrates. This chain is Beta-glucosidase 21, found in Arabidopsis thaliana (Mouse-ear cress).